A 128-amino-acid polypeptide reads, in one-letter code: Large ribosomal subunit protein bL17 (128 aa).

The protein belongs to the bacterial ribosomal protein bL17 family. Part of the 50S ribosomal subunit. Contacts protein L32.

This chain is Large ribosomal subunit protein bL17, found in Pseudomonas savastanoi pv. phaseolicola (strain 1448A / Race 6) (Pseudomonas syringae pv. phaseolicola (strain 1448A / Race 6)).